Here is a 652-residue protein sequence, read N- to C-terminus: ATP-dependent zinc metalloprotease FtsH 2 (652 aa).

Residues M1–R6 lie on the Cytoplasmic side of the membrane. Residues G7–M27 traverse the membrane as a helical segment. Residues R28 to D108 are Extracellular-facing. Residues L109–F129 form a helical membrane-spanning segment. The Cytoplasmic portion of the chain corresponds to R130–T652. G200–T207 serves as a coordination point for ATP. Residue H420 coordinates Zn(2+). E421 is an active-site residue. Zn(2+) is bound by residues H424 and D496.

It in the central section; belongs to the AAA ATPase family. This sequence in the C-terminal section; belongs to the peptidase M41 family. As to quaternary structure, homohexamer. Zn(2+) is required as a cofactor.

It is found in the cell membrane. Its function is as follows. Acts as a processive, ATP-dependent zinc metallopeptidase for both cytoplasmic and membrane proteins. Plays a role in the quality control of integral membrane proteins. This Sphaerobacter thermophilus (strain ATCC 49802 / DSM 20745 / KCCM 41009 / NCIMB 13125 / S 6022) protein is ATP-dependent zinc metalloprotease FtsH 2.